The sequence spans 312 residues: Plasma membrane-associated coenzyme Q6 reductase PGA3 (312 aa).

The Extracellular segment spans residues 1 to 15 (MSKEDIEGTNILDEP). The helical transmembrane segment at 16–36 (VHGIYIPAALFVVGVAITTYM) threads the bilayer. The Cytoplasmic segment spans residues 37-39 (SGE). Residues 40 to 60 (LKILWSLPILFMIIFVRAYSA) traverse the membrane as a helical segment. The Extracellular segment spans residues 61–179 (YKRRRSLYPD…LNYEPNSSKH (119 aa)). The 104-residue stretch at 70-173 (DRWTSLELED…KGPIGTLNYE (104 aa)) folds into the FAD-binding FR-type domain. FAD is bound by residues 153 to 168 (AGLN…GPIG) and 179 to 211 (HLGI…KVSL). Residues 180 to 200 (LGIVAGGSGITPVLQILNEII) form a helical membrane-spanning segment. At 201-312 (TVPEDLTKVS…SSGDDQVFVF (112 aa)) the chain is on the cytoplasmic side.

Belongs to the flavoprotein pyridine nucleotide cytochrome reductase family. Requires FAD as cofactor.

Its subcellular location is the cell membrane. It is found in the endoplasmic reticulum membrane. It catalyses the reaction 2 Fe(III)-[cytochrome b5] + NADH = 2 Fe(II)-[cytochrome b5] + NAD(+) + H(+). With respect to regulation, inhibited by diphenylene iodonium (DPI). Functionally, NADH-dependent cytochrome b5 reductase that reduces coenzyme Q6 at the plasma membrane and mediates lifespan extension by calorie restriction by shifting fermentative to respiratory metabolism, probably through modulating the NAD(+)/NADH ratio. The chain is Plasma membrane-associated coenzyme Q6 reductase PGA3 (PGA3) from Saccharomyces cerevisiae (strain ATCC 204508 / S288c) (Baker's yeast).